We begin with the raw amino-acid sequence, 370 residues long: 3-dehydroquinate synthase (370 aa).

NAD(+)-binding positions include 112 to 116 (GVIGD), 136 to 137 (TT), K149, K158, and 176 to 179 (TLAT). E191, H254, and H276 together coordinate Zn(2+).

The protein belongs to the sugar phosphate cyclases superfamily. Dehydroquinate synthase family. Requires Co(2+) as cofactor. Zn(2+) is required as a cofactor. It depends on NAD(+) as a cofactor.

The protein resides in the cytoplasm. It carries out the reaction 7-phospho-2-dehydro-3-deoxy-D-arabino-heptonate = 3-dehydroquinate + phosphate. It participates in metabolic intermediate biosynthesis; chorismate biosynthesis; chorismate from D-erythrose 4-phosphate and phosphoenolpyruvate: step 2/7. Catalyzes the conversion of 3-deoxy-D-arabino-heptulosonate 7-phosphate (DAHP) to dehydroquinate (DHQ). In Xylella fastidiosa (strain M12), this protein is 3-dehydroquinate synthase.